A 361-amino-acid chain; its full sequence is Protein YIM1-2 (361 aa).

This sequence belongs to the YIM1 family.

The protein localises to the lipid droplet. It localises to the mitochondrion. The protein is Protein YIM1-2 (YIM1-2) of Lachancea thermotolerans (strain ATCC 56472 / CBS 6340 / NRRL Y-8284) (Yeast).